A 531-amino-acid chain; its full sequence is MRNLRAAAPASFLAPPAPPLLLPPSTPTPRGAFSAKASPAAAAAQAHGWCPSPRRVGRLRRRAGAASSSVASVEDAKKDVLVALSQIIDPDFGTDIVSCGFVKDLEISEALEEVSFRLELTTPACPIKDMFEEKANEVVAALPWVKKVNVTMSAQPARPAYAGELPEGLQKISNIIAVSSCKGGVGKSTVAVNLAYTLAGMGARVGIFDADVFGPSLPTMVSPENRLLVMNPESRSILPTEYLGVKMVSFGFAGQGRAIMRGPMVSGVINQLLTTTDWGELDYLVIDMPPGTGDIHLTLCQVAPLTAAVIVTTPQKLAFIDVAKGVRMFSKLKVPCVAVVENMCYFDADGKRFYPFGQGSGAQVVQQFGIPHLFDLPIRPTLSASGDTGIPEVVADPQGDVAKTFQNLGVCVVQQCAKIRQQVSTAVSYDRSIRAIRVKVPDSDEEFLLHPATVRRNDRSAQSVDEWTGEQKVQYGDIPEDIEPEEIRPMGNYAVSITWPDGFSQIAPYDQLEMLERLVDVPRATTAAVSS.

The transit peptide at 1–62 directs the protein to the chloroplast; that stretch reads MRNLRAAAPA…PRRVGRLRRR (62 aa). Residues 17 to 27 show a composition bias toward pro residues; it reads APPLLLPPSTP. Positions 17–37 are disordered; sequence APPLLLPPSTPTPRGAFSAKA. Positions 28-37 are enriched in low complexity; that stretch reads TPRGAFSAKA. 181–188 provides a ligand contact to ATP; that stretch reads CKGGVGKS.

Belongs to the Mrp/NBP35 ATP-binding proteins family. Requires [4Fe-4S] cluster as cofactor.

It localises to the plastid. The protein resides in the chloroplast stroma. Functionally, required for photosystem I (PSI) biosynthesis and assembly. May serve as a chloroplast scaffold protein that specifically assembles iron-sulfur (4Fe-4S) clusters and transfers them to the chloroplast PSI and ferredoxin-thioredoxin (FTR) complexes. Probably not required for assembly or stability of plastidic 2Fe-2S clusters. In Oryza sativa subsp. japonica (Rice), this protein is Fe-S cluster assembly factor HCF101, chloroplastic (HCF101).